Here is an 89-residue protein sequence, read N- to C-terminus: Large ribosomal subunit protein bL27 (89 aa).

The segment at Met1–Val23 is disordered.

The protein belongs to the bacterial ribosomal protein bL27 family.

The sequence is that of Large ribosomal subunit protein bL27 from Rhizobium meliloti (strain 1021) (Ensifer meliloti).